The chain runs to 247 residues: 5-oxoprolinase subunit A (247 aa).

Belongs to the LamB/PxpA family. In terms of assembly, forms a complex composed of PxpA, PxpB and PxpC.

The catalysed reaction is 5-oxo-L-proline + ATP + 2 H2O = L-glutamate + ADP + phosphate + H(+). Functionally, catalyzes the cleavage of 5-oxoproline to form L-glutamate coupled to the hydrolysis of ATP to ADP and inorganic phosphate. The chain is 5-oxoprolinase subunit A from Klebsiella pneumoniae subsp. pneumoniae (strain ATCC 700721 / MGH 78578).